The chain runs to 302 residues: MGDVMNIDSIISRLLEVRGARPGKNVQLSEGEIRGLCLKSREIFLSQPILLELEAPLKICGDIHGQYYDLLRLFEYGGFPPESNYLFLGDYVDRGKQSLETICLLLAYKIKYSENFFLLRGNHECASINRIYGFYDECKRRYSIKLWKTFTDCFNCLPVAAIVDEKIFCCHGGLSPDLTSMEQIRRIMRPTDVPDQGLLCDLLWSDPDKDTMGWGENDRGVSFTFGAEVVAKFLQKHEFDLICRAHQVVEDGYEFFAKRMLVTLFSAPNYCGEFDNAGAMMSVDDTLMCSFQILKPADKRKK.

Residues Asp-62, His-64, Asp-90, and Asn-122 each coordinate Mn(2+). The active-site Proton donor is His-123. The Mn(2+) site is built by His-171 and His-246.

The protein belongs to the PPP phosphatase family. PP-1 subfamily. In terms of assembly, interacts with Nop17l. Interacts with uri; uri inhibits Pp1-87B phosphatase activity. Interacts with Rif1. Mn(2+) is required as a cofactor.

The protein resides in the cytoplasm. The enzyme catalyses O-phospho-L-seryl-[protein] + H2O = L-seryl-[protein] + phosphate. The catalysed reaction is O-phospho-L-threonyl-[protein] + H2O = L-threonyl-[protein] + phosphate. Is essential for the regulation of mitotic chromosomal segregation as well as regulation of chromatin condensation during interphase. The chain is Serine/threonine-protein phosphatase alpha-2 isoform (Pp1-87B) from Drosophila melanogaster (Fruit fly).